Consider the following 463-residue polypeptide: Argininosuccinate lyase (463 aa).

This sequence belongs to the lyase 1 family. Argininosuccinate lyase subfamily.

The protein resides in the cytoplasm. It carries out the reaction 2-(N(omega)-L-arginino)succinate = fumarate + L-arginine. It participates in amino-acid biosynthesis; L-arginine biosynthesis; L-arginine from L-ornithine and carbamoyl phosphate: step 3/3. The chain is Argininosuccinate lyase from Thermosynechococcus vestitus (strain NIES-2133 / IAM M-273 / BP-1).